Here is a 280-residue protein sequence, read N- to C-terminus: Chaperone protein LppX (280 aa).

The N-terminal stretch at 1 to 18 is a signal peptide; the sequence is MRKWLIFLLIAAVAGLSA. C19 is lipidated: N-palmitoyl cysteine. C19 carries S-diacylglycerol cysteine lipidation.

The protein resides in the cell membrane. Functionally, is required for the expression of the adjacently encoded xylanase Xyn11E in an active form. LppX seems to act as a specific chaperone necessary for the correct folding of the xylanase during secretion across the cytoplasmic membrane. This chain is Chaperone protein LppX, found in Paenibacillus barcinonensis.